The sequence spans 275 residues: MSEVTSFAVFGNPIAHSKSPRIHELFAAQTGITLTYQRVLAPLDNFEQMLRQYFHDGAGGANVTAPFKERAFAEADERSECAALAGAVNTLKRLSDGRLYGDNTDGIGLLSDLQRLALVKPLDRVLLVGAGGAARGVIQPLLASGCTVVLTNRTFFKAEALAKIFCDIGDIQATALDGLHGQSFDLIINATSSGMYDSIPNLPAELISPETSCYDMFYLPQLTPFLSWCVQQGAIHYADGLGMLVGQAAHAFKLWHGVMPDVEPVIDLLKQDLAK.

Residues 17-19 (SKS) and Thr64 contribute to the shikimate site. The Proton acceptor role is filled by Lys68. Glu80 is a binding site for NADP(+). Shikimate-binding residues include Asn89 and Asp105. NADP(+)-binding positions include 129–133 (GAGGA), 152–157 (NRTFFK), and Met216. Tyr218 provides a ligand contact to shikimate. Position 240 (Gly240) interacts with NADP(+).

It belongs to the shikimate dehydrogenase family. Homodimer.

It catalyses the reaction shikimate + NADP(+) = 3-dehydroshikimate + NADPH + H(+). It participates in metabolic intermediate biosynthesis; chorismate biosynthesis; chorismate from D-erythrose 4-phosphate and phosphoenolpyruvate: step 4/7. Its function is as follows. Involved in the biosynthesis of the chorismate, which leads to the biosynthesis of aromatic amino acids. Catalyzes the reversible NADPH linked reduction of 3-dehydroshikimate (DHSA) to yield shikimate (SA). This chain is Shikimate dehydrogenase (NADP(+)), found in Pectobacterium atrosepticum (strain SCRI 1043 / ATCC BAA-672) (Erwinia carotovora subsp. atroseptica).